Here is a 141-residue protein sequence, read N- to C-terminus: Nucleoside diphosphate kinase (141 aa).

Residues Lys-11, Phe-59, Arg-87, Thr-93, Arg-104, and Asn-114 each contribute to the ATP site. Catalysis depends on His-117, which acts as the Pros-phosphohistidine intermediate.

The protein belongs to the NDK family. In terms of assembly, homotetramer. It depends on Mg(2+) as a cofactor.

The protein resides in the cytoplasm. The catalysed reaction is a 2'-deoxyribonucleoside 5'-diphosphate + ATP = a 2'-deoxyribonucleoside 5'-triphosphate + ADP. The enzyme catalyses a ribonucleoside 5'-diphosphate + ATP = a ribonucleoside 5'-triphosphate + ADP. In terms of biological role, major role in the synthesis of nucleoside triphosphates other than ATP. The ATP gamma phosphate is transferred to the NDP beta phosphate via a ping-pong mechanism, using a phosphorylated active-site intermediate. The sequence is that of Nucleoside diphosphate kinase from Teredinibacter turnerae (strain ATCC 39867 / T7901).